The following is an 85-amino-acid chain: MERNSRRILVGKVVSDKMDKTITVLVETYKNHPIYKKRVKYSKKYKAHDEQQVAKIGDKVQIMETRPLSKTKNFRLVKVVEKAIL.

It belongs to the universal ribosomal protein uS17 family. As to quaternary structure, part of the 30S ribosomal subunit.

Its function is as follows. One of the primary rRNA binding proteins, it binds specifically to the 5'-end of 16S ribosomal RNA. The chain is Small ribosomal subunit protein uS17 from Mesoplasma florum (strain ATCC 33453 / NBRC 100688 / NCTC 11704 / L1) (Acholeplasma florum).